Here is a 357-residue protein sequence, read N- to C-terminus: Quinolinate synthase (357 aa).

Iminosuccinate-binding residues include His50 and Ser71. Cys116 contacts [4Fe-4S] cluster. Residues 142 to 144 (YAN) and Ser159 contribute to the iminosuccinate site. Cys203 serves as a coordination point for [4Fe-4S] cluster. Residues 229 to 231 (HPE) and Thr246 each bind iminosuccinate. Cys300 is a binding site for [4Fe-4S] cluster.

Belongs to the quinolinate synthase family. Type 1 subfamily. The cofactor is [4Fe-4S] cluster.

The protein localises to the cytoplasm. It carries out the reaction iminosuccinate + dihydroxyacetone phosphate = quinolinate + phosphate + 2 H2O + H(+). The protein operates within cofactor biosynthesis; NAD(+) biosynthesis; quinolinate from iminoaspartate: step 1/1. Its function is as follows. Catalyzes the condensation of iminoaspartate with dihydroxyacetone phosphate to form quinolinate. This chain is Quinolinate synthase, found in Shewanella sp. (strain ANA-3).